Here is a 245-residue protein sequence, read N- to C-terminus: UPF0246 protein cgR_1824 (245 aa).

It belongs to the UPF0246 family.

This chain is UPF0246 protein cgR_1824, found in Corynebacterium glutamicum (strain R).